The chain runs to 289 residues: uncharacterized protein (289 aa).

The signal sequence occupies residues 1-19 (MAKWLGAPLARGVSTATRA). The next 2 membrane-spanning stretches (helical) occupy residues 90–110 (GLLAAAFVASVLLGVGIGWGV) and 257–277 (AALSLSLYVSSDYGGGYLVFA).

It is found in the cell membrane. This is an uncharacterized protein from Mycobacterium tuberculosis (strain CDC 1551 / Oshkosh).